The following is a 186-amino-acid chain: M-phase phosphoprotein 6 homolog (186 aa).

Ser2 carries the post-translational modification N-acetylserine. Disordered regions lie at residues 22–47 (KFGK…VEPI) and 95–186 (SNVG…NSKK). The span at 32–42 (SNSNTPSNINS) shows a compositional bias: low complexity. Ser42 carries the post-translational modification Phosphoserine. Over residues 122–147 (SGSRKRKFDEGEQNEDEKRDAKDKEF) the composition is skewed to basic and acidic residues. The residue at position 150 (Ser150) is a Phosphoserine. Residues 168 to 186 (IKKKKTNHNGKNKNRNSKK) show a composition bias toward basic residues.

The protein belongs to the MPP6 family. Associates with the RNA exosome complex.

The protein localises to the nucleus. Its function is as follows. RNA-binding protein that associates with the RNA exosome complex. Involved in surveillance of pre-rRNAs and pre-mRNAs, and the degradation of cryptic non-coding RNAs (ncRNA) derived from intergenic regions and the ribosomal DNA spacer heterochromatin. This Saccharomyces cerevisiae (strain ATCC 204508 / S288c) (Baker's yeast) protein is M-phase phosphoprotein 6 homolog (MPP6).